A 571-amino-acid polypeptide reads, in one-letter code: Apolipoprotein N-acyltransferase (571 aa).

6 helical membrane-spanning segments follow: residues 13–33 (VVLW…IALV), 51–68 (LYAA…GLRY), 72–92 (LMFL…VLFI), 118–138 (LVAA…FTGI), 152–172 (MLIQ…IVCV), and 199–219 (LVTA…SMNA). The region spanning 234-527 (NELTVYEQDI…SDVIYAQPRR (294 aa)) is the CN hydrolase domain. Glu-275 (proton acceptor) is an active-site residue. Lys-380 is a catalytic residue. Cys-430 functions as the Nucleophile in the catalytic mechanism. The chain crosses the membrane as a helical span at residues 542-562 (AGLMGAATLCGLAWMTFEWLM).

The protein belongs to the CN hydrolase family. Apolipoprotein N-acyltransferase subfamily.

It is found in the cell inner membrane. The catalysed reaction is N-terminal S-1,2-diacyl-sn-glyceryl-L-cysteinyl-[lipoprotein] + a glycerophospholipid = N-acyl-S-1,2-diacyl-sn-glyceryl-L-cysteinyl-[lipoprotein] + a 2-acyl-sn-glycero-3-phospholipid + H(+). Its pathway is protein modification; lipoprotein biosynthesis (N-acyl transfer). Catalyzes the phospholipid dependent N-acylation of the N-terminal cysteine of apolipoprotein, the last step in lipoprotein maturation. The polypeptide is Apolipoprotein N-acyltransferase (Rhodopirellula baltica (strain DSM 10527 / NCIMB 13988 / SH1)).